The primary structure comprises 259 residues: Haloacid dehalogenase-like hydrolase domain-containing protein 2 (259 aa).

Residues Asp-13 and Asn-15 each coordinate Mg(2+). Residues 13–15 (DLN) and 46–47 (TN) each bind substrate. A coiled-coil region spans residues 47–72 (NTTKESKKDLLERLKKLEFEISEDEI). The residue at position 50 (Lys-50) is an N6-succinyllysine. Residue Lys-179 coordinates substrate. Position 204 (Asp-204) interacts with Mg(2+).

Belongs to the HAD-like hydrolase superfamily. Mg(2+) is required as a cofactor.

This chain is Haloacid dehalogenase-like hydrolase domain-containing protein 2 (Hdhd2), found in Mus musculus (Mouse).